A 160-amino-acid chain; its full sequence is MAKLKKHPTGTIAQNKKARHDYFIEHKFEAGLVLSGWEVKSLRATKVQLVDSYVLLKDGEAWLMGCHITPLKTASTHVIADPTRTRKLLLNKRELEKLTSSVQQKGYACVALSVYWKEHLVKCEIALGKGKKEYDKRHTERERDSDRELQRAVRSKGKDD.

Residues 131-160 (KKEYDKRHTERERDSDRELQRAVRSKGKDD) form a disordered region.

This sequence belongs to the SmpB family.

It localises to the cytoplasm. Its function is as follows. Required for rescue of stalled ribosomes mediated by trans-translation. Binds to transfer-messenger RNA (tmRNA), required for stable association of tmRNA with ribosomes. tmRNA and SmpB together mimic tRNA shape, replacing the anticodon stem-loop with SmpB. tmRNA is encoded by the ssrA gene; the 2 termini fold to resemble tRNA(Ala) and it encodes a 'tag peptide', a short internal open reading frame. During trans-translation Ala-aminoacylated tmRNA acts like a tRNA, entering the A-site of stalled ribosomes, displacing the stalled mRNA. The ribosome then switches to translate the ORF on the tmRNA; the nascent peptide is terminated with the 'tag peptide' encoded by the tmRNA and targeted for degradation. The ribosome is freed to recommence translation, which seems to be the essential function of trans-translation. The protein is SsrA-binding protein of Pseudomonas syringae pv. syringae (strain B728a).